We begin with the raw amino-acid sequence, 105 residues long: Precursor of CEP15 (105 aa).

Residues 1–29 (MDATKIKFDVILLSFLLIISGIPSNLGLS) form the signal peptide. A propeptide spanning residues 30–90 (TSVRGTTRSE…PSPPVPDYDD (61 aa)) is cleaved from the precursor. The segment covering 68-80 (DYYDGGSSSSTTS) has biased composition (low complexity). The interval 68-105 (DYYDGGSSSSTTSPSPPVPDYDDIYRRQGDVPSPGIGH) is disordered. A hydroxyproline mark is found at Pro-99 and Pro-101.

The protein belongs to the C-terminally encoded plant signaling peptide (CEP) family. In terms of assembly, interacts with CEP receptors (e.g. CEPR1 and CEPR2). The mature small signaling peptide is generated by proteolytic processing of the longer precursor.

Its subcellular location is the secreted. The protein resides in the extracellular space. The protein localises to the apoplast. Its function is as follows. Extracellular signaling peptide that may regulate primary root growth rate and systemic nitrogen (N)-demand signaling. The chain is Precursor of CEP15 from Arabidopsis thaliana (Mouse-ear cress).